We begin with the raw amino-acid sequence, 250 residues long: 4-hydroxy-tetrahydrodipicolinate reductase (250 aa).

NAD(+) is bound by residues 10–15 (GARGRI), 78–80 (GTT), and 105–108 (APNF). His135 functions as the Proton donor/acceptor in the catalytic mechanism. His136 serves as a coordination point for (S)-2,3,4,5-tetrahydrodipicolinate. Lys139 (proton donor) is an active-site residue. A (S)-2,3,4,5-tetrahydrodipicolinate-binding site is contributed by 145 to 146 (GT). The segment at 158-177 (RAEAGSAPQPDATTTALDGA) is disordered.

Belongs to the DapB family.

Its subcellular location is the cytoplasm. The enzyme catalyses (S)-2,3,4,5-tetrahydrodipicolinate + NAD(+) + H2O = (2S,4S)-4-hydroxy-2,3,4,5-tetrahydrodipicolinate + NADH + H(+). It carries out the reaction (S)-2,3,4,5-tetrahydrodipicolinate + NADP(+) + H2O = (2S,4S)-4-hydroxy-2,3,4,5-tetrahydrodipicolinate + NADPH + H(+). The protein operates within amino-acid biosynthesis; L-lysine biosynthesis via DAP pathway; (S)-tetrahydrodipicolinate from L-aspartate: step 4/4. Its function is as follows. Catalyzes the conversion of 4-hydroxy-tetrahydrodipicolinate (HTPA) to tetrahydrodipicolinate. The sequence is that of 4-hydroxy-tetrahydrodipicolinate reductase from Streptomyces griseus subsp. griseus (strain JCM 4626 / CBS 651.72 / NBRC 13350 / KCC S-0626 / ISP 5235).